A 634-amino-acid polypeptide reads, in one-letter code: ATP-dependent clpX-like chaperone, mitochondrial (634 aa).

The transit peptide at 1–56 (MSSCGACTCGAAAARLLTTSLTSAQRGISCGRIHVPVLGRLGTTLDAQALRRAPLR) directs the protein to the mitochondrion. A disordered region spans residues 69 to 102 (DGANKDGSGDGNKKSVTEGSSKKSGSGNSGKGGN). Over residues 70–84 (GANKDGSGDGNKKSV) the composition is skewed to basic and acidic residues. Over residues 85–94 (TEGSSKKSGS) the composition is skewed to low complexity. In terms of domain architecture, ClpX-type ZB spans 94-147 (SGNSGKGGNQLRCPKCGDLCTHVETFVSSTRFVKCEKCHHFFVVLSEADSKKSI). The Zn(2+) site is built by Cys106, Cys109, Cys128, and Cys131. 295-302 (PTGSGKTL) contacts ATP. N6-acetyllysine is present on Lys438. The span at 599 to 611 (KEPGYIRAPSKES) shows a compositional bias: basic and acidic residues. The interval 599 to 634 (KEPGYIRAPSKESSEEEYDSGVEEDGWPRQADAANS) is disordered. Positions 612–623 (SEEEYDSGVEED) are enriched in acidic residues. Position 618 is a phosphoserine (Ser618).

The protein belongs to the ClpX chaperone family. Homohexamer that forms a ring structure; this hexamerization requires ATP binding. Component of the ClpXP complex formed by the assembly of two CLPP heptameric rings with two CLPX hexameric rings, giving rise to a symmetrical structure with two central CLPP rings flanked by a CLPX ring at either end of the complex. Interacts with TFAM. Detected in liver (at protein level).

The protein resides in the mitochondrion. The protein localises to the mitochondrion matrix. Its subcellular location is the mitochondrion nucleoid. It catalyses the reaction ATP + H2O = ADP + phosphate + H(+). In terms of biological role, ATP-dependent chaperone that functions as an unfoldase. As part of the ClpXP protease complex, it recognizes specific protein substrates, unfolds them using energy derived from ATP hydrolysis, and then translocates them to the proteolytic subunit (CLPP) of the ClpXP complex for degradation. Thanks to its chaperone activity, it also functions in the incorporation of the pyridoxal phosphate cofactor into 5-aminolevulinate synthase, thereby activating 5-aminolevulinate (ALA) synthesis, the first step in heme biosynthesis. This chaperone is also involved in the control of mtDNA nucleoid distribution, by regulating mitochondrial transcription factor A (TFAM) activity. This is ATP-dependent clpX-like chaperone, mitochondrial from Mus musculus (Mouse).